Here is a 129-residue protein sequence, read N- to C-terminus: ATP synthase epsilon chain (129 aa).

Belongs to the ATPase epsilon chain family. F-type ATPases have 2 components, CF(1) - the catalytic core - and CF(0) - the membrane proton channel. CF(1) has five subunits: alpha(3), beta(3), gamma(1), delta(1), epsilon(1). CF(0) has three main subunits: a, b and c.

It localises to the cell inner membrane. Produces ATP from ADP in the presence of a proton gradient across the membrane. The polypeptide is ATP synthase epsilon chain (Campylobacter jejuni subsp. jejuni serotype O:2 (strain ATCC 700819 / NCTC 11168)).